Here is a 282-residue protein sequence, read N- to C-terminus: Bifunctional protein FolD (282 aa).

NADP(+)-binding positions include 164–166 (GRS) and Ser-189.

This sequence belongs to the tetrahydrofolate dehydrogenase/cyclohydrolase family. Homodimer.

It carries out the reaction (6R)-5,10-methylene-5,6,7,8-tetrahydrofolate + NADP(+) = (6R)-5,10-methenyltetrahydrofolate + NADPH. It catalyses the reaction (6R)-5,10-methenyltetrahydrofolate + H2O = (6R)-10-formyltetrahydrofolate + H(+). Its pathway is one-carbon metabolism; tetrahydrofolate interconversion. Functionally, catalyzes the oxidation of 5,10-methylenetetrahydrofolate to 5,10-methenyltetrahydrofolate and then the hydrolysis of 5,10-methenyltetrahydrofolate to 10-formyltetrahydrofolate. This chain is Bifunctional protein FolD, found in Streptococcus suis (strain 05ZYH33).